We begin with the raw amino-acid sequence, 1396 residues long: Sterol 3-beta-glucosyltransferase (1396 aa).

Positions 1-16 (MRPLLDEAKRRVDRRL) are enriched in basic and acidic residues. 3 disordered regions span residues 1-59 (MRPL…TKEG), 82-193 (HARF…AAPV), and 206-233 (SKGS…TSAS). The segment covering 18–28 (ASRQSLSTSRI) has biased composition (polar residues). Composition is skewed to basic and acidic residues over residues 35-44 (ERLKDDHDAQ) and 82-108 (HARF…KESQ). Positions 156 to 175 (GSSQRQGGAQTEPSTGNQMS) are enriched in polar residues. Residues 237–288 (LRLMEMFGFESPEKVLVEYACSLVQSMLLQGYMYVTEGHICFYAYLPRKSTV) form the GRAM 1 domain. Residues 289–387 (AIKSGYLYKR…WVKSLQKVIF (99 aa)) enclose the PH domain. Polar residues-rich tracts occupy residues 459–479 (QAKN…QSRA) and 487–497 (SLTSGLSQVLG). Disordered regions lie at residues 459-531 (QAKN…RDLS) and 576-635 (FRRQ…VQQS). The segment covering 585-595 (QFGRRHSDETA) has biased composition (basic and acidic residues). In terms of domain architecture, GRAM 2 spans 719–785 (DRFRAHFALP…KDVENVEKEK (67 aa)). The segment at 841–880 (EQDESEAAKAEHRMLQEARKDASGGLIPQTPSDESPEIHP) is disordered. Residues 846 to 862 (EAAKAEHRMLQEARKDA) are compositionally biased toward basic and acidic residues. Positions 907, 908, 910, 1210, 1212, 1225, 1229, 1230, 1249, and 1250 each coordinate UDP-alpha-D-glucose.

This sequence belongs to the glycosyltransferase 28 family.

The protein resides in the cytoplasm. Its subcellular location is the preautophagosomal structure membrane. It catalyses the reaction a sterol + UDP-alpha-D-glucose = a sterol 3-beta-D-glucoside + UDP + H(+). The catalysed reaction is ergosterol + UDP-alpha-D-glucose = ergosteryl 3-beta-D-glucoside + UDP + H(+). Its function is as follows. Sterol glycosyltransferase responsible for the glycosylation of ergosterol to form ergosterol-glucoside. In Aspergillus terreus (strain NIH 2624 / FGSC A1156), this protein is Sterol 3-beta-glucosyltransferase.